Reading from the N-terminus, the 325-residue chain is Serine/threonine-protein phosphatase 2A activator 1 (325 aa).

Belongs to the PTPA-type PPIase family.

It localises to the cytoplasm. It is found in the nucleus. It catalyses the reaction [protein]-peptidylproline (omega=180) = [protein]-peptidylproline (omega=0). PPIases accelerate the folding of proteins. It catalyzes the cis-trans isomerization of proline imidic peptide bonds in oligopeptides. Acts as a regulatory subunit for PP2A-like phosphatases modulating their activity or substrate specificity, probably by inducing a conformational change in the catalytic subunit, a direct target of the PPIase. Can reactivate inactive phosphatase PP2A-phosphatase methylesterase complexes (PP2Ai) in presence of ATP and Mg(2+) by dissociating the inactive form from the complex. This is Serine/threonine-protein phosphatase 2A activator 1 (rrd1) from Schizosaccharomyces pombe (strain 972 / ATCC 24843) (Fission yeast).